The sequence spans 121 residues: Protein FAM241B (121 aa).

Positions 12–58 are disordered; the sequence is QDDDPRVRTTTQPPRGSIPRQSFFNRGHGAPPGGPGPRQQQAGARLG. A compositionally biased stretch (polar residues) spans 19–35; it reads RTTTQPPRGSIPRQSFF. At S33 the chain carries Phosphoserine. Residues 48 to 58 are compositionally biased toward low complexity; sequence PRQQQAGARLG. At S62 the chain carries Phosphoserine. A helical transmembrane segment spans residues 92–112; sequence ILLLFLLMMLGVRGLLLVGLV.

Belongs to the FAM241 family.

It localises to the membrane. Its function is as follows. May play a role in lysosome homeostasis. The polypeptide is Protein FAM241B (Homo sapiens (Human)).